A 380-amino-acid polypeptide reads, in one-letter code: Probable inactive reductase easA (380 aa).

Residues P25–T27, A60, Q102, and H171 contribute to the FMN site. Positions 171 and 174 each coordinate substrate. Residues K223, G299, G324 to R325, and R325 each bind FMN. Y352 serves as a coordination point for substrate.

This sequence belongs to the NADH:flavin oxidoreductase/NADH oxidase family.

Functionally, probable inactive dehydrogenase; part of the gene cluster that mediates the biosynthesis of fungal ergot alkaloid ergovaline, the predominant ergopeptine product in E.festucae var. lolii. DmaW catalyzes the first step of ergot alkaloid biosynthesis by condensing dimethylallyl diphosphate (DMAP) and tryptophan to form 4-dimethylallyl-L-tryptophan. The second step is catalyzed by the methyltransferase easF that methylates 4-dimethylallyl-L-tryptophan in the presence of S-adenosyl-L-methionine, resulting in the formation of 4-dimethylallyl-L-abrine. The catalase easC and the FAD-dependent oxidoreductase easE then transform 4-dimethylallyl-L-abrine to chanoclavine-I which is further oxidized by easD in the presence of NAD(+), resulting in the formation of chanoclavine-I aldehyde. Agroclavine dehydrogenase easG then mediates the conversion of chanoclavine-I aldehyde to agroclavine via a non-enzymatic adduct reaction: the substrate is an iminium intermediate that is formed spontaneously from chanoclavine-I aldehyde in the presence of glutathione. The presence of easA is not required to complete this reaction. Further conversion of agroclavine to paspalic acid is a two-step process involving oxidation of agroclavine to elymoclavine and of elymoclavine to paspalic acid, the second step being performed by the elymoclavine oxidase cloA. Paspalic acid is then further converted to D-lysergic acid. Ergovaline is assembled from D-lysergic acid and three different amino acids by the D-lysergyl-peptide-synthetase composed of a monomudular (lpsB) and a trimodular (lpsA) nonribosomal peptide synthetase subunit. The polypeptide is Probable inactive reductase easA (Epichloe festucae var. lolii (Neotyphodium lolii)).